Here is a 91-residue protein sequence, read N- to C-terminus: MPRPTGKKFDKRRQQQNPLFKRKKFCRFTAAGVDHIDYKDLETLKDFIGENGKITPARLTGTKSHYQRQLDTAIKRARFLALVPYTDQHKA.

Belongs to the bacterial ribosomal protein bS18 family. In terms of assembly, part of the 30S ribosomal subunit. Forms a tight heterodimer with protein bS6.

Functionally, binds as a heterodimer with protein bS6 to the central domain of the 16S rRNA, where it helps stabilize the platform of the 30S subunit. The polypeptide is Small ribosomal subunit protein bS18 (Paraburkholderia xenovorans (strain LB400)).